The primary structure comprises 624 residues: Kelch-like ECH-associated protein 1 (624 aa).

Cys-38 is subject to S-(2-succinyl)cysteine. The 73-residue stretch at 77 to 149 (CDVTLQVKYE…AYTASISVGE (73 aa)) folds into the BTB domain. Arg-135 participates in a covalent cross-link: N5-[4-(S-L-cysteinyl)-5-methyl-1H-imidazol-2-yl]-L-ornithine (Arg-Cys) (interchain with C-151 in KEAP1). An S-(2-succinyl)cysteine mark is found at Cys-151 and Cys-241. S-(2,3-dicarboxypropyl)cysteine; alternate is present on Cys-151. Cys-151 is modified (S-nitrosocysteine; alternate). An N5-[4-(S-L-cysteinyl)-5-methyl-1H-imidazol-2-yl]-L-ornithine (Cys-Arg) (interchain with R-135 in KEAP1) cross-link involves residue Cys-151. The 103-residue stretch at 184 to 286 (AIGIANFAEQ…TPRFLQTQLQ (103 aa)) folds into the BACK domain. S-(2,3-dicarboxypropyl)cysteine is present on residues Cys-257 and Cys-273. An S-(2-succinyl)cysteine mark is found at Cys-288 and Cys-319. An S-(2,3-dicarboxypropyl)cysteine; alternate modification is found at Cys-288. Kelch repeat units follow at residues 327–372 (LIYT…VVGG), 373–423 (LLYA…VIDG), 424–470 (HIYA…VLNR), 471–517 (LLYA…VLHS), 519–564 (IYAA…VHQG), and 565–611 (RIYV…VTME). Residue Cys-434 is modified to S-cGMP-cysteine. S-(2-succinyl)cysteine is present on Cys-613.

Belongs to the KEAP1 family. Component of the BCR(KEAP1) E3 ubiquitin ligase complex, at least composed of 2 molecules of CUL3, 2 molecules of KEAP1, and RBX1. Interacts with NFE2L2/NRF2; the interaction is direct. Forms a ternary complex with NFE2L2/NRF2 and PGAM5. Interacts with (phosphorylated) SQSTM1/p62; the interaction is direct and inactivates the BCR(KEAP1) complex by sequestering it in inclusion bodies, promoting its degradation. Interacts with NFE2L1. Interacts with BPTF and PTMA. Interacts with MAP1LC3B. Interacts indirectly with ENC1. Interacts with SESN1 and SESN2. Interacts with HSP90AA1 and HSP90AB1. Interacts with PGCKA1; this interaction prevents the ubiquitination of KEAP1 by TRIM25, thus protecting KEAP1 from degradation. Post-translationally, non-enzymatic covalent modifications of reactive cysteines by electrophile metabolites inactivate the BCR(KEAP1) complex. Accumulation of fumarate promotes the formation of cysteine S-succination (S-(2-succinyl)cysteine), leading to inactivate the BCR(KEAP1) complex and promote NFE2L2/NRF2 nuclear accumulation and activation. Nitric oxide-dependent 8-Nitro-cGMP formation promotes cysteine guanylation (S-cGMP-cysteine), leading to NFE2L2/NRF2 nuclear accumulation and activation. Itaconate, an anti-inflammatory metabolite generated in response to lipopolysaccharide, alkylates cysteines, activating NFE2L2/NRF2. Methylglyoxal, a reactive metabolite that accumulates when the glycolytic enzyme PGK1 is inhibited, promotes formation of a methylimidazole cross-link between proximal Cys-151 and Arg-135 on another KEAP1 molecule, resulting in an inactive dimer that inactivates the BCR(KEAP1) complex. Degraded via a proteasomal-independent process during selective autophagy: interaction with phosphorylated SQSTM1/p62 sequesters KEAP1 in inclusion bodies, leading to its degradation. In terms of processing, auto-ubiquitinated by the BCR(KEAP1) complex. Quinone-induced oxidative stress, but not sulforaphane, increases its ubiquitination. Ubiquitination and subsequent degradation is most pronounced following prolonged exposure of cells to oxidative stress, particularly in glutathione-deficient cells that are highly susceptible to oxidative stress. Deubiquitinated by USP25; leading to stabilization. Ubiquitinated by TRIM25; leading to degradation upon ER stress.

The protein resides in the cytoplasm. It is found in the nucleus. It participates in protein modification; protein ubiquitination. With respect to regulation, ubiquitin ligase activity of the BCR(KEAP1) complex is inhibited by oxidative stress and electrophile metabolites such as sulforaphane. Electrophile metabolites react with reactive cysteine residues in KEAP1 and trigger non-enzymatic covalent modifications of these cysteine residues, leading to inactivate the ubiquitin ligase activity of the BCR(KEAP1) complex. Selective autophagy also inactivates the BCR(KEAP1) complex via interaction between KEAP1 and SQSTM1/p62, which sequesters the complex in inclusion bodies and promotes its degradation. Functionally, substrate-specific adapter of a BCR (BTB-CUL3-RBX1) E3 ubiquitin ligase complex that regulates the response to oxidative stress by targeting NFE2L2/NRF2 for ubiquitination. KEAP1 acts as a key sensor of oxidative and electrophilic stress: in normal conditions, the BCR(KEAP1) complex mediates ubiquitination and degradation of NFE2L2/NRF2, a transcription factor regulating expression of many cytoprotective genes. In response to oxidative stress, different electrophile metabolites trigger non-enzymatic covalent modifications of highly reactive cysteine residues in KEAP1, leading to inactivate the ubiquitin ligase activity of the BCR(KEAP1) complex, promoting NFE2L2/NRF2 nuclear accumulation and expression of phase II detoxifying enzymes. In response to selective autophagy, KEAP1 is sequestered in inclusion bodies following its interaction with SQSTM1/p62, leading to inactivation of the BCR(KEAP1) complex and activation of NFE2L2/NRF2. The BCR(KEAP1) complex also mediates ubiquitination of SQSTM1/p62, increasing SQSTM1/p62 sequestering activity and degradation. The BCR(KEAP1) complex also targets BPTF and PGAM5 for ubiquitination and degradation by the proteasome. The polypeptide is Kelch-like ECH-associated protein 1 (Rattus norvegicus (Rat)).